The sequence spans 582 residues: TRAF-type zinc finger domain-containing protein 1 (582 aa).

Ala2 is modified (N-acetylalanine). A TRAF-type zinc finger spans residues 27–103 (IHEIHCQRNI…DLELSILKLK (77 aa)). Residue Ser191 is modified to Phosphoserine. Positions 216-238 (EEQERQERNRGQQPPKEGGEDGA) are disordered. Phosphoserine occurs at positions 278, 320, 326, 327, 409, 415, 430, and 470. Disordered stretches follow at residues 402–509 (EGIP…IAPG) and 522–582 (PENI…EEEE). Polar residues-rich tracts occupy residues 454–471 (PFNN…STSG) and 486–504 (LNNS…SQNG).

As to quaternary structure, interacts with MAVS, TICAM1, TRAF1, TRAF2, TRAF3 and TRAF6.

Functionally, negative feedback regulator that controls excessive innate immune responses. Regulates both Toll-like receptor 4 (TLR4) and DDX58/RIG1-like helicases (RLH) pathways. May inhibit the LTR pathway by direct interaction with TRAF6 and attenuation of NF-kappa-B activation. May negatively regulate the RLH pathway downstream from MAVS and upstream of NF-kappa-B and IRF3. This is TRAF-type zinc finger domain-containing protein 1 (TRAFD1) from Macaca fascicularis (Crab-eating macaque).